We begin with the raw amino-acid sequence, 230 residues long: Ribonuclease HII (230 aa).

Residues Phe-28–Asp-217 enclose the RNase H type-2 domain. A divalent metal cation is bound by residues Asp-34, Glu-35, and Asp-126. Positions His-211–Phe-230 are disordered.

This sequence belongs to the RNase HII family. Requires Mn(2+) as cofactor. Mg(2+) serves as cofactor.

It localises to the cytoplasm. The enzyme catalyses Endonucleolytic cleavage to 5'-phosphomonoester.. Endonuclease that specifically degrades the RNA of RNA-DNA hybrids. This Geobacter sp. (strain M21) protein is Ribonuclease HII.